Consider the following 332-residue polypeptide: Biotin synthase (332 aa).

A Radical SAM core domain is found at 51–278 (RTIQLSTLMS…KSYVRLSAGR (228 aa)). 3 residues coordinate [4Fe-4S] cluster: cysteine 66, cysteine 70, and cysteine 73. [2Fe-2S] cluster-binding residues include cysteine 110, cysteine 141, cysteine 201, and arginine 273.

Belongs to the radical SAM superfamily. Biotin synthase family. As to quaternary structure, homodimer. [4Fe-4S] cluster is required as a cofactor. Requires [2Fe-2S] cluster as cofactor.

It carries out the reaction (4R,5S)-dethiobiotin + (sulfur carrier)-SH + 2 reduced [2Fe-2S]-[ferredoxin] + 2 S-adenosyl-L-methionine = (sulfur carrier)-H + biotin + 2 5'-deoxyadenosine + 2 L-methionine + 2 oxidized [2Fe-2S]-[ferredoxin]. The protein operates within cofactor biosynthesis; biotin biosynthesis; biotin from 7,8-diaminononanoate: step 2/2. Functionally, catalyzes the conversion of dethiobiotin (DTB) to biotin by the insertion of a sulfur atom into dethiobiotin via a radical-based mechanism. In Haemophilus influenzae (strain PittGG), this protein is Biotin synthase.